A 196-amino-acid polypeptide reads, in one-letter code: Recombination protein RecR (196 aa).

The C4-type zinc-finger motif lies at 57–72 (CERCHTFTEGAVCETC). The Toprim domain maps to 80–175 (TRLCVVETPA…HVTRLARGVP (96 aa)).

Belongs to the RecR family.

Its function is as follows. May play a role in DNA repair. It seems to be involved in an RecBC-independent recombinational process of DNA repair. It may act with RecF and RecO. The chain is Recombination protein RecR from Acidovorax sp. (strain JS42).